Here is a 452-residue protein sequence, read N- to C-terminus: Pup--protein ligase (452 aa).

E9 is a binding site for Mg(2+). R53 is an ATP binding site. A Mg(2+)-binding site is contributed by Y55. The Proton acceptor role is filled by D57. Position 63 (E63) interacts with Mg(2+). ATP contacts are provided by T66 and W419.

Belongs to the Pup ligase/Pup deamidase family. Pup-conjugating enzyme subfamily.

It catalyses the reaction ATP + [prokaryotic ubiquitin-like protein]-L-glutamate + [protein]-L-lysine = ADP + phosphate + N(6)-([prokaryotic ubiquitin-like protein]-gamma-L-glutamyl)-[protein]-L-lysine.. It participates in protein degradation; proteasomal Pup-dependent pathway. It functions in the pathway protein modification; protein pupylation. In terms of biological role, catalyzes the covalent attachment of the prokaryotic ubiquitin-like protein modifier Pup to the proteasomal substrate proteins, thereby targeting them for proteasomal degradation. This tagging system is termed pupylation. The ligation reaction involves the side-chain carboxylate of the C-terminal glutamate of Pup and the side-chain amino group of a substrate lysine. This is Pup--protein ligase from Mycolicibacterium gilvum (strain PYR-GCK) (Mycobacterium gilvum (strain PYR-GCK)).